A 1093-amino-acid chain; its full sequence is Protein AF-17 (1093 aa).

The PHD-type 1 zinc-finger motif lies at 5 to 57; sequence VGGCCVCSDERGWAENPLVYCDGHACSVAVHQACYGIVQVPTGPWFCRKCESQ. The C2HC pre-PHD-type zinc-finger motif lies at 62 to 95; it reads RVRCELCPHKDGALKRTDNGGWAHVVCALYIPEV. The PHD-type 2 zinc finger occupies 118–181; sequence KTCYICEEQG…KYCGYCKYHF (64 aa). Positions 185-500 are disordered; it reads KTSRHSSGGG…GGPAAPSLPS (316 aa). Positions 191–212 are enriched in gly residues; the sequence is SGGGGGGAGGGGGSMGGGGSGF. Residues 231-255 are compositionally biased toward basic residues; the sequence is PTHHERGQKKSRKDKERLKQKHKKR. A Phosphoserine modification is found at Ser258. Residues 258 to 268 show a composition bias toward pro residues; it reads SPPSILTPPVV. The segment covering 282–300 has biased composition (basic and acidic residues); sequence SHHEASTQETSESSRESKG. A compositionally biased stretch (basic residues) spans 301–316; sequence KKSSSHSLSHKGKKLS. Over residues 317–340 the composition is skewed to low complexity; the sequence is SGKGVSSFTSASSSSSSSSSSSGG. A compositionally biased stretch (polar residues) spans 345–354; it reads AVSSLQSSPD. Pro residues predominate over residues 374–388; it reads APAPSAPPSPSAPEP. A phosphoserine mark is found at Ser378 and Ser423. Low complexity predominate over residues 410–425; sequence STTTSSSGRARAPSPG. Thr451 carries the post-translational modification Phosphothreonine. Basic residues predominate over residues 465-484; the sequence is EKKHKASKRSRHGPGRPKGS. Positions 729 to 764 are leucine-zipper; the sequence is LQKENQRLQEQILSLTAKKERLQILNVQLSVPFPAL. Disordered regions lie at residues 775-871 and 1060-1093; these read VPGP…RAPG and QTNP…QEKG. Residues 787-796 are compositionally biased toward low complexity; the sequence is SSDSLSTSKS. The segment covering 804–813 has biased composition (polar residues); it reads GLDNSLSTSS. Composition is skewed to low complexity over residues 818–832 and 839–853; these read SGCP…SFHS and LLQQ…ALPG.

As to quaternary structure, interacts with histone H3; interaction is necessary for MLLT6 binding to nucleosomes; interaction is inhibited by histone H3 'Lys-27' methylations (H3K27me1, H3K27me2 and H3K27me3).

Its subcellular location is the nucleus. This Homo sapiens (Human) protein is Protein AF-17 (MLLT6).